The chain runs to 60 residues: Cytotoxin 2 (60 aa).

4 cysteine pairs are disulfide-bonded: Cys3-Cys21, Cys14-Cys38, Cys42-Cys53, and Cys54-Cys59.

This sequence belongs to the three-finger toxin family. Short-chain subfamily. Type IA cytotoxin sub-subfamily. As to quaternary structure, monomer in solution; Homodimer and oligomer in the presence of negatively charged lipids forming a pore with a size ranging between 20 and 30 Angstroms. As to expression, expressed by the venom gland.

It localises to the secreted. It is found in the target cell membrane. This three-finger cytotoxin is a basic protein that interacts and penetrates into the cell membrane, with the tips of all the three loops. Cytotoxins which have a Pro-30 (P-type) interacts with membrane stronger that those which have a 'Ser-28' (S-type). CTII interacts with membrane stronger than CTI. The protein is Cytotoxin 2 of Naja oxiana (Central Asian cobra).